Here is a 375-residue protein sequence, read N- to C-terminus: L-asparaginase 2 (375 aa).

Residues 1-19 form the signal peptide; that stretch reads MKKQRMLVLFTALLFVFTG. The interval 22–46 is disordered; that stretch reads HSPETKESPKEKAQTQKVSSASASE. A compositionally biased stretch (basic and acidic residues) spans 24–35; sequence PETKESPKEKAQ. The region spanning 51–375 is the Asparaginase/glutaminase domain; the sequence is PNIRILATGG…QKIQAYFNEY (325 aa). The O-isoaspartyl threonine intermediate role is filled by Thr-61. Substrate is bound by residues Ser-108 and 141 to 142; that span reads TD.

Belongs to the asparaginase 1 family. In terms of assembly, homotetramer.

It carries out the reaction L-asparagine + H2O = L-aspartate + NH4(+). In terms of biological role, catalyzes the conversion of L-asparagine to L-aspartate and ammonium. The polypeptide is L-asparaginase 2 (ansZ) (Bacillus subtilis (strain 168)).